A 386-amino-acid chain; its full sequence is Homogentisate solanesyltransferase, chloroplastic (386 aa).

Residues Met1–Arg69 constitute a chloroplast transit peptide. Helical transmembrane passes span Val130–Ile150, Leu181–Ile201, Leu204–Leu220, Phe225–Val245, Trp259–Ile279, Ile306–Phe326, Ser335–Leu355, and Ile365–Phe385.

Belongs to the UbiA prenyltransferase family.

It localises to the plastid. Its subcellular location is the chloroplast membrane. It catalyses the reaction all-trans-nonaprenyl diphosphate + homogentisate + H(+) = 2-methyl-6-(all-trans-nonaprenyl)benzene-1,4-diol + CO2 + diphosphate. Its activity is regulated as follows. Inhibited by haloxydine (3,5-dichloro-2,6-difluoro-4-haloxypyridine). In terms of biological role, involved in the synthesis of plastoquinone-9. Can use both homogentisic acid and 2,5-dihydroxyphenylacetic acid gamma-lactone as prenyl acceptors, and solanesyl diphosphate &gt; farnesyl diphosphate &gt; geranylgeranyl diphosphate &gt;&gt; phytyl diphosphate as prenyl donors. Do not catalyze the decardoxylation of homogentisate uncoupled from prenylation. This is Homogentisate solanesyltransferase, chloroplastic (HST) from Arabidopsis thaliana (Mouse-ear cress).